Consider the following 340-residue polypeptide: Holliday junction branch migration complex subunit RuvB (340 aa).

Positions Met1–Tyr183 are large ATPase domain (RuvB-L). ATP contacts are provided by residues Leu22, Arg23, Gly64, Lys67, Thr68, Thr69, Glu130–Phe132, Arg173, Tyr183, and Arg220. Thr68 is a binding site for Mg(2+). The segment at Ala184 to Glu254 is small ATPAse domain (RuvB-S). A head domain (RuvB-H) region spans residues Asp257–Phe340. DNA is bound by residues Lys312 and Arg317.

The protein belongs to the RuvB family. As to quaternary structure, homohexamer. Forms an RuvA(8)-RuvB(12)-Holliday junction (HJ) complex. HJ DNA is sandwiched between 2 RuvA tetramers; dsDNA enters through RuvA and exits via RuvB. An RuvB hexamer assembles on each DNA strand where it exits the tetramer. Each RuvB hexamer is contacted by two RuvA subunits (via domain III) on 2 adjacent RuvB subunits; this complex drives branch migration. In the full resolvosome a probable DNA-RuvA(4)-RuvB(12)-RuvC(2) complex forms which resolves the HJ.

It is found in the cytoplasm. It carries out the reaction ATP + H2O = ADP + phosphate + H(+). In terms of biological role, the RuvA-RuvB-RuvC complex processes Holliday junction (HJ) DNA during genetic recombination and DNA repair, while the RuvA-RuvB complex plays an important role in the rescue of blocked DNA replication forks via replication fork reversal (RFR). RuvA specifically binds to HJ cruciform DNA, conferring on it an open structure. The RuvB hexamer acts as an ATP-dependent pump, pulling dsDNA into and through the RuvAB complex. RuvB forms 2 homohexamers on either side of HJ DNA bound by 1 or 2 RuvA tetramers; 4 subunits per hexamer contact DNA at a time. Coordinated motions by a converter formed by DNA-disengaged RuvB subunits stimulates ATP hydrolysis and nucleotide exchange. Immobilization of the converter enables RuvB to convert the ATP-contained energy into a lever motion, pulling 2 nucleotides of DNA out of the RuvA tetramer per ATP hydrolyzed, thus driving DNA branch migration. The RuvB motors rotate together with the DNA substrate, which together with the progressing nucleotide cycle form the mechanistic basis for DNA recombination by continuous HJ branch migration. Branch migration allows RuvC to scan DNA until it finds its consensus sequence, where it cleaves and resolves cruciform DNA. This is Holliday junction branch migration complex subunit RuvB from Syntrophus aciditrophicus (strain SB).